The following is a 332-amino-acid chain: Malate dehydrogenase (332 aa).

15-21 is an NAD(+) binding site; that stretch reads GAAGHIG. Arg96 and Arg102 together coordinate substrate. NAD(+)-binding positions include Asn109 and 133–135; that span reads VGN. Substrate contacts are provided by Asn135 and Arg166. His191 (proton acceptor) is an active-site residue.

Belongs to the LDH/MDH superfamily. MDH type 2 family.

It catalyses the reaction (S)-malate + NAD(+) = oxaloacetate + NADH + H(+). In terms of biological role, catalyzes the reversible oxidation of malate to oxaloacetate. This chain is Malate dehydrogenase, found in Mycolicibacterium vanbaalenii (strain DSM 7251 / JCM 13017 / BCRC 16820 / KCTC 9966 / NRRL B-24157 / PYR-1) (Mycobacterium vanbaalenii).